Reading from the N-terminus, the 150-residue chain is UPF0208 membrane protein VS_0999 (150 aa).

The next 2 helical transmembrane spans lie at 42–62 (FGVK…MVFN) and 70–90 (AVVM…WLGN).

Belongs to the UPF0208 family.

The protein resides in the cell inner membrane. The protein is UPF0208 membrane protein VS_0999 of Vibrio atlanticus (strain LGP32) (Vibrio splendidus (strain Mel32)).